The following is a 119-amino-acid chain: Immunoglobulin lambda variable 4-69 (119 aa).

Positions 1 to 20 are cleaved as a signal peptide; the sequence is MAWTPLLFLTLLLHCTGSLS. The framework-1 stretch occupies residues 21–45; sequence QLVLTQSPSASASLGASVKLTCTLS. The Ig-like domain maps to 21-119; that stretch reads QLVLTQSPSA…YYCQTWGTGI (99 aa). An intrachain disulfide couples cysteine 42 to cysteine 112. The segment at 46–52 is complementarity-determining-1; that stretch reads SGHSSYA. The interval 53 to 69 is framework-2; sequence IAWHQQQPEKGPRYLMK. The segment at 70–76 is complementarity-determining-2; that stretch reads LNSDGSH. Positions 73–92 are disordered; the sequence is DGSHSKGDGIPDRFSGSSSG. Residues 77–112 are framework-3; sequence SKGDGIPDRFSGSSSGAERYLTISSLQSEDEADYYC. A complementarity-determining-3 region spans residues 113 to 119; the sequence is QTWGTGI.

As to quaternary structure, immunoglobulins are composed of two identical heavy chains and two identical light chains; disulfide-linked.

It is found in the secreted. The protein resides in the cell membrane. V region of the variable domain of immunoglobulin light chains that participates in the antigen recognition. Immunoglobulins, also known as antibodies, are membrane-bound or secreted glycoproteins produced by B lymphocytes. In the recognition phase of humoral immunity, the membrane-bound immunoglobulins serve as receptors which, upon binding of a specific antigen, trigger the clonal expansion and differentiation of B lymphocytes into immunoglobulins-secreting plasma cells. Secreted immunoglobulins mediate the effector phase of humoral immunity, which results in the elimination of bound antigens. The antigen binding site is formed by the variable domain of one heavy chain, together with that of its associated light chain. Thus, each immunoglobulin has two antigen binding sites with remarkable affinity for a particular antigen. The variable domains are assembled by a process called V-(D)-J rearrangement and can then be subjected to somatic hypermutations which, after exposure to antigen and selection, allow affinity maturation for a particular antigen. This chain is Immunoglobulin lambda variable 4-69, found in Homo sapiens (Human).